The primary structure comprises 426 residues: Enolase (426 aa).

Residue Gln-163 coordinates (2R)-2-phosphoglycerate. The active-site Proton donor is the Glu-205. Mg(2+) contacts are provided by Asp-242, Glu-285, and Asp-312. (2R)-2-phosphoglycerate-binding residues include Lys-337, Arg-366, Ser-367, and Lys-388. Lys-337 serves as the catalytic Proton acceptor.

It belongs to the enolase family. It depends on Mg(2+) as a cofactor.

It localises to the cytoplasm. The protein resides in the secreted. Its subcellular location is the cell surface. The enzyme catalyses (2R)-2-phosphoglycerate = phosphoenolpyruvate + H2O. Its pathway is carbohydrate degradation; glycolysis; pyruvate from D-glyceraldehyde 3-phosphate: step 4/5. Functionally, catalyzes the reversible conversion of 2-phosphoglycerate (2-PG) into phosphoenolpyruvate (PEP). It is essential for the degradation of carbohydrates via glycolysis. This is Enolase from Gluconobacter oxydans (strain 621H) (Gluconobacter suboxydans).